The following is a 235-amino-acid chain: CMP-N,N'-diacetyllegionaminic acid synthase (235 aa).

The protein belongs to the CMP-NeuNAc synthase family.

It catalyses the reaction N,N-diacetyllegionaminate + CTP = CMP-N,N-diacetyllegionaminate + diphosphate. Functionally, involved in biosynthesis of legionaminic acid (5,7-diamino-3,5,7,9-tetradeoxy-D-glycero-D-galacto-non-2-ulosonic acid)(Leg), a sialic acid-like derivative that is incorporated into flagellin via O-linkage to Ser/Thr. Catalyzes the conversion of N,N'-diacetyllegionaminic acid (Leg5Ac7Ac) and CTP into CMP-N,N'-diacetyllegionaminic acid (CMP-Leg5Ac7Ac). The sequence is that of CMP-N,N'-diacetyllegionaminic acid synthase (legF) from Campylobacter jejuni subsp. jejuni serotype O:2 (strain ATCC 700819 / NCTC 11168).